Reading from the N-terminus, the 926-residue chain is Storkhead-box protein 2 (926 aa).

Disordered regions lie at residues 1 to 32 (MKKTRSTTLRRAWPSSDFSDRASDRMRSRSEK), 338 to 391 (EEEK…HLDI), 452 to 529 (EMPF…SYID), 564 to 588 (KEPSSACSLLEPGKPPESLPSYGEL), 632 to 672 (GVKK…GGVA), 724 to 803 (LKSH…GTMQ), and 825 to 926 (LAPK…VTSV). The span at 18–32 (FSDRASDRMRSRSEK) shows a compositional bias: basic and acidic residues. Residues 353–378 (HSGRSKKSRTHRKSHGKSRSHSKTRV) are compositionally biased toward basic residues. A compositionally biased stretch (basic and acidic residues) spans 379-391 (SKGDPSDGSHLDI). Residues 463 to 472 (SHSKVHRSHS) are compositionally biased toward basic residues. Residues 473-495 (HTQDRRSRNERSNKAKERSRSMD) show a composition bias toward basic and acidic residues. The segment covering 518–529 (QDDQTPSQSYID) has biased composition (polar residues). Residues 632–658 (GVKKLSPSDRQVPHSSREPVGHKEESP) are compositionally biased toward basic and acidic residues. A compositionally biased stretch (polar residues) spans 746 to 769 (LGTSAAQAMPASQRQQESGGNQEA). Basic and acidic residues predominate over residues 785-799 (GANKNTEEEKNREDV). Polar residues-rich tracts occupy residues 847–884 (MDSSSITVDSGFNSPRTRESLASNTSSIVESNRRQNPA) and 914–926 (KPSNCLQASVTSV).

The protein is Storkhead-box protein 2 (STOX2) of Homo sapiens (Human).